The following is a 244-amino-acid chain: uncharacterized protein (244 aa).

Residues 1 to 11 show a composition bias toward basic residues; sequence MSRRSRSRSRS. Disordered stretches follow at residues 1 to 104 and 213 to 244; these read MSRR…TLNE and ARQK…KFGK. Over residues 12 to 31 the composition is skewed to basic and acidic residues; the sequence is PKRDREERKRREDRDRDRER. Residues 32-46 are compositionally biased toward basic residues; the sequence is KRDRKDRERKRRHRS. Positions 63–75 are enriched in basic and acidic residues; it reads FREERRRRERNES. A compositionally biased stretch (pro residues) spans 77–89; sequence KLPPPPPPPPSDP. Residues 213 to 223 show a composition bias toward basic and acidic residues; sequence ARQKSDMKKNE. The segment covering 224–234 has biased composition (polar residues); sequence QQAILNKSGNS.

This is an uncharacterized protein from Caenorhabditis elegans.